Reading from the N-terminus, the 580-residue chain is Arginine--tRNA ligase (580 aa).

A 'HIGH' region motif is present at residues 127 to 137; that stretch reads PNTHKELHVGH.

The protein belongs to the class-I aminoacyl-tRNA synthetase family. As to quaternary structure, monomer.

Its subcellular location is the cytoplasm. The catalysed reaction is tRNA(Arg) + L-arginine + ATP = L-arginyl-tRNA(Arg) + AMP + diphosphate. This chain is Arginine--tRNA ligase, found in Bdellovibrio bacteriovorus (strain ATCC 15356 / DSM 50701 / NCIMB 9529 / HD100).